The primary structure comprises 357 residues: 3-isopropylmalate dehydrogenase (357 aa).

An NAD(+)-binding site is contributed by 76–89 (GPQWDTIDPALRPE). Substrate is bound by residues Arg96, Arg106, Arg134, and Asp224. Mg(2+) is bound by residues Asp224, Asp248, and Asp252. 282-294 (GSAPDIAGQGIAN) provides a ligand contact to NAD(+).

This sequence belongs to the isocitrate and isopropylmalate dehydrogenases family. LeuB type 1 subfamily. In terms of assembly, homodimer. Mg(2+) serves as cofactor. Requires Mn(2+) as cofactor.

The protein resides in the cytoplasm. The catalysed reaction is (2R,3S)-3-isopropylmalate + NAD(+) = 4-methyl-2-oxopentanoate + CO2 + NADH. It functions in the pathway amino-acid biosynthesis; L-leucine biosynthesis; L-leucine from 3-methyl-2-oxobutanoate: step 3/4. Functionally, catalyzes the oxidation of 3-carboxy-2-hydroxy-4-methylpentanoate (3-isopropylmalate) to 3-carboxy-4-methyl-2-oxopentanoate. The product decarboxylates to 4-methyl-2 oxopentanoate. The chain is 3-isopropylmalate dehydrogenase from Xanthomonas campestris pv. campestris (strain 8004).